We begin with the raw amino-acid sequence, 71 residues long: Long neurotoxin 1 (71 aa).

Disulfide bonds link Cys3–Cys20, Cys14–Cys41, Cys26–Cys30, Cys45–Cys56, and Cys57–Cys62.

Belongs to the three-finger toxin family. Long-chain subfamily. Type II alpha-neurotoxin sub-subfamily. As to expression, expressed by the venom gland.

Its subcellular location is the secreted. Functionally, binds with high affinity to muscular (alpha-1/CHRNA1) and neuronal (alpha-7/CHRNA7) nicotinic acetylcholine receptor (nAChR) and inhibits acetylcholine from binding to the receptor, thereby impairing neuromuscular and neuronal transmission. This Naja haje haje (Egyptian cobra) protein is Long neurotoxin 1.